The sequence spans 670 residues: DNA ligase (670 aa).

Residues 33 to 37 (DAEYD), 82 to 83 (SL), and E114 each bind NAD(+). Catalysis depends on K116, which acts as the N6-AMP-lysine intermediate. Residues R137, E173, K291, and K315 each coordinate NAD(+). Residues C409, C412, C427, and C433 each coordinate Zn(2+). The 79-residue stretch at 592–670 (VQSDRLSGNT…ENALAELLSD (79 aa)) folds into the BRCT domain.

The protein belongs to the NAD-dependent DNA ligase family. LigA subfamily. The cofactor is Mg(2+). Requires Mn(2+) as cofactor.

It carries out the reaction NAD(+) + (deoxyribonucleotide)n-3'-hydroxyl + 5'-phospho-(deoxyribonucleotide)m = (deoxyribonucleotide)n+m + AMP + beta-nicotinamide D-nucleotide.. In terms of biological role, DNA ligase that catalyzes the formation of phosphodiester linkages between 5'-phosphoryl and 3'-hydroxyl groups in double-stranded DNA using NAD as a coenzyme and as the energy source for the reaction. It is essential for DNA replication and repair of damaged DNA. The chain is DNA ligase from Idiomarina loihiensis (strain ATCC BAA-735 / DSM 15497 / L2-TR).